A 244-amino-acid polypeptide reads, in one-letter code: tRNA pseudouridine synthase B (244 aa).

Residue Asp46 is the Nucleophile of the active site.

Belongs to the pseudouridine synthase TruB family. Type 1 subfamily.

It carries out the reaction uridine(55) in tRNA = pseudouridine(55) in tRNA. In terms of biological role, responsible for synthesis of pseudouridine from uracil-55 in the psi GC loop of transfer RNAs. In Bordetella parapertussis (strain 12822 / ATCC BAA-587 / NCTC 13253), this protein is tRNA pseudouridine synthase B.